The following is a 90-amino-acid chain: Small ribosomal subunit protein bS20 (90 aa).

Belongs to the bacterial ribosomal protein bS20 family.

Functionally, binds directly to 16S ribosomal RNA. The protein is Small ribosomal subunit protein bS20 of Desulfitobacterium hafniense (strain DSM 10664 / DCB-2).